A 354-amino-acid polypeptide reads, in one-letter code: Chorismate synthase (354 aa).

An NADP(+)-binding site is contributed by Arg-46. Residues 123–125, 239–240, Gly-284, 299–303, and Arg-325 contribute to the FMN site; these read RSS, NA, and KPVAT.

It belongs to the chorismate synthase family. In terms of assembly, homotetramer. FMNH2 is required as a cofactor.

The enzyme catalyses 5-O-(1-carboxyvinyl)-3-phosphoshikimate = chorismate + phosphate. Its pathway is metabolic intermediate biosynthesis; chorismate biosynthesis; chorismate from D-erythrose 4-phosphate and phosphoenolpyruvate: step 7/7. Catalyzes the anti-1,4-elimination of the C-3 phosphate and the C-6 proR hydrogen from 5-enolpyruvylshikimate-3-phosphate (EPSP) to yield chorismate, which is the branch point compound that serves as the starting substrate for the three terminal pathways of aromatic amino acid biosynthesis. This reaction introduces a second double bond into the aromatic ring system. The chain is Chorismate synthase from Azobacteroides pseudotrichonymphae genomovar. CFP2.